The sequence spans 160 residues: Putative NrdI-like protein (160 aa).

Belongs to the NrdI family.

This Streptococcus pyogenes serotype M6 (strain ATCC BAA-946 / MGAS10394) protein is Putative NrdI-like protein.